A 227-amino-acid polypeptide reads, in one-letter code: tRNA (guanine-N(1)-)-methyltransferase (227 aa).

Residues Gly-110 and 129–134 each bind S-adenosyl-L-methionine; that span reads IGDYVL.

This sequence belongs to the RNA methyltransferase TrmD family. Homodimer.

The protein localises to the cytoplasm. It carries out the reaction guanosine(37) in tRNA + S-adenosyl-L-methionine = N(1)-methylguanosine(37) in tRNA + S-adenosyl-L-homocysteine + H(+). Its function is as follows. Specifically methylates guanosine-37 in various tRNAs. The polypeptide is tRNA (guanine-N(1)-)-methyltransferase (Mycoplasmopsis agalactiae (strain NCTC 10123 / CIP 59.7 / PG2) (Mycoplasma agalactiae)).